The sequence spans 270 residues: Formamidopyrimidine-DNA glycosylase (270 aa).

Proline 2 acts as the Schiff-base intermediate with DNA in catalysis. Glutamate 3 acts as the Proton donor in catalysis. The Proton donor; for beta-elimination activity role is filled by lysine 58. Residues histidine 91, arginine 110, and arginine 151 each coordinate DNA. The FPG-type zinc-finger motif lies at 236-270 (AVYGREGEPCTHCGAPLQGVRIGGRATIYCSQCQR). The active-site Proton donor; for delta-elimination activity is the arginine 260.

The protein belongs to the FPG family. Monomer. The cofactor is Zn(2+).

The catalysed reaction is Hydrolysis of DNA containing ring-opened 7-methylguanine residues, releasing 2,6-diamino-4-hydroxy-5-(N-methyl)formamidopyrimidine.. The enzyme catalyses 2'-deoxyribonucleotide-(2'-deoxyribose 5'-phosphate)-2'-deoxyribonucleotide-DNA = a 3'-end 2'-deoxyribonucleotide-(2,3-dehydro-2,3-deoxyribose 5'-phosphate)-DNA + a 5'-end 5'-phospho-2'-deoxyribonucleoside-DNA + H(+). Its function is as follows. Involved in base excision repair of DNA damaged by oxidation or by mutagenic agents. Acts as a DNA glycosylase that recognizes and removes damaged bases. Has a preference for oxidized purines, such as 7,8-dihydro-8-oxoguanine (8-oxoG). Has AP (apurinic/apyrimidinic) lyase activity and introduces nicks in the DNA strand. Cleaves the DNA backbone by beta-delta elimination to generate a single-strand break at the site of the removed base with both 3'- and 5'-phosphates. This chain is Formamidopyrimidine-DNA glycosylase, found in Acidithiobacillus ferrooxidans (strain ATCC 23270 / DSM 14882 / CIP 104768 / NCIMB 8455) (Ferrobacillus ferrooxidans (strain ATCC 23270)).